We begin with the raw amino-acid sequence, 500 residues long: Cytochrome P450 71B38 (500 aa).

A helical transmembrane segment spans residues 3–23; sequence IFLCFLLLLPLSLILFKKLLP. Residue Cys441 coordinates heme.

This sequence belongs to the cytochrome P450 family. Heme is required as a cofactor.

Its subcellular location is the membrane. The polypeptide is Cytochrome P450 71B38 (CYP71B38) (Arabidopsis thaliana (Mouse-ear cress)).